The primary structure comprises 357 residues: Protein FAM118A (357 aa).

Methionine 1 is subject to N-acetylmethionine. A helical transmembrane segment spans residues 30 to 46 (LLLVIGTGVSAAVAPGI). Serine 311 is subject to Phosphoserine.

This sequence belongs to the FAM118 family.

It localises to the membrane. This chain is Protein FAM118A (Fam118a), found in Mus musculus (Mouse).